Reading from the N-terminus, the 207-residue chain is Small ribosomal subunit protein uS4 (207 aa).

Positions 33-54 (KLDSKPGQHGRTSGARTSDYGN) are disordered. A compositionally biased stretch (polar residues) spans 42–53 (GRTSGARTSDYG). Residues 97-157 (SRLDNVVYRM…EKSKKQVRIA (61 aa)) form the S4 RNA-binding domain.

Belongs to the universal ribosomal protein uS4 family. Part of the 30S ribosomal subunit. Contacts protein S5. The interaction surface between S4 and S5 is involved in control of translational fidelity.

In terms of biological role, one of the primary rRNA binding proteins, it binds directly to 16S rRNA where it nucleates assembly of the body of the 30S subunit. Its function is as follows. With S5 and S12 plays an important role in translational accuracy. The polypeptide is Small ribosomal subunit protein uS4 (Ralstonia pickettii (strain 12J)).